The chain runs to 266 residues: 5'-nucleotidase SurE (266 aa).

A divalent metal cation is bound by residues Asp-8, Asp-9, Ser-39, and Asn-93.

It belongs to the SurE nucleotidase family. A divalent metal cation is required as a cofactor.

It localises to the cytoplasm. It carries out the reaction a ribonucleoside 5'-phosphate + H2O = a ribonucleoside + phosphate. In terms of biological role, nucleotidase that shows phosphatase activity on nucleoside 5'-monophosphates. The chain is 5'-nucleotidase SurE from Thermococcus gammatolerans (strain DSM 15229 / JCM 11827 / EJ3).